Reading from the N-terminus, the 214-residue chain is Octanoyltransferase (214 aa).

The BPL/LPL catalytic domain occupies 35–211 (KSNMNFIWLG…IIHEEFNFNF (177 aa)). Substrate is bound by residues 75-82 (RGGEVTCH), 142-144 (SIG), and 155-157 (GFS). Cys-173 serves as the catalytic Acyl-thioester intermediate.

It belongs to the LipB family.

It localises to the cytoplasm. It carries out the reaction octanoyl-[ACP] + L-lysyl-[protein] = N(6)-octanoyl-L-lysyl-[protein] + holo-[ACP] + H(+). It functions in the pathway protein modification; protein lipoylation via endogenous pathway; protein N(6)-(lipoyl)lysine from octanoyl-[acyl-carrier-protein]: step 1/2. In terms of biological role, catalyzes the transfer of endogenously produced octanoic acid from octanoyl-acyl-carrier-protein onto the lipoyl domains of lipoate-dependent enzymes. Lipoyl-ACP can also act as a substrate although octanoyl-ACP is likely to be the physiological substrate. The polypeptide is Octanoyltransferase (Prochlorococcus marinus subsp. pastoris (strain CCMP1986 / NIES-2087 / MED4)).